Consider the following 400-residue polypeptide: Enoyl-[acyl-carrier-protein] reductase [NADH] 2 (400 aa).

Residues 48 to 53 (GASSGF), 75 to 76 (FE), 112 to 113 (DA), and 141 to 142 (LA) contribute to the NAD(+) site. Tyr-228 lines the substrate pocket. Tyr-238 acts as the Proton donor in catalysis. Residues Lys-247 and 276–278 (LVT) each bind NAD(+).

The protein belongs to the TER reductase family. Monomer.

It catalyses the reaction a 2,3-saturated acyl-[ACP] + NAD(+) = a (2E)-enoyl-[ACP] + NADH + H(+). Its pathway is lipid metabolism; fatty acid biosynthesis. Involved in the final reduction of the elongation cycle of fatty acid synthesis (FAS II). Catalyzes the reduction of a carbon-carbon double bond in an enoyl moiety that is covalently linked to an acyl carrier protein (ACP). The sequence is that of Enoyl-[acyl-carrier-protein] reductase [NADH] 2 from Vibrio vulnificus (strain YJ016).